Here is a 539-residue protein sequence, read N- to C-terminus: Membrane protein insertase YidC (539 aa).

5 consecutive transmembrane segments (helical) span residues 6-26, 341-361, 416-436, 454-474, and 495-515; these read TLLV…WQVA, SVIQ…TFIV, LGGC…YWAL, LSAQ…MFLI, and PVMF…YWLV.

It belongs to the OXA1/ALB3/YidC family. Type 1 subfamily. As to quaternary structure, interacts with the Sec translocase complex via SecD. Specifically interacts with transmembrane segments of nascent integral membrane proteins during membrane integration.

The protein localises to the cell inner membrane. Functionally, required for the insertion and/or proper folding and/or complex formation of integral membrane proteins into the membrane. Involved in integration of membrane proteins that insert both dependently and independently of the Sec translocase complex, as well as at least some lipoproteins. Aids folding of multispanning membrane proteins. The polypeptide is Membrane protein insertase YidC (Vibrio vulnificus (strain YJ016)).